Here is a 626-residue protein sequence, read N- to C-terminus: E3 ubiquitin-protein ligase HRD1 (626 aa).

The N-terminal stretch at 1 to 15 (MQLLLSSVCMALTSA) is a signal peptide. Residues 16-38 (VIGFAYYQKQQFYPAVVYITKSN) lie on the Lumenal side of the membrane. The chain crosses the membrane as a helical span at residues 39-59 (ASMGVIYIQFFVIVFMFGKLL). Residues 60–96 (SKIFLGTLRAAEFEHLLERFWYALTETCLAFTVFRDD) lie on the Cytoplasmic side of the membrane. A helical membrane pass occupies residues 97–117 (FNPRFVALFTVLLFLKSFHWL). The Lumenal segment spans residues 118 to 128 (AEERVDFMERS). A helical transmembrane segment spans residues 129-149 (PVLGWLFHIRVGSLLTVLGIL). At 150 to 167 (DYVLLIHAYNSTLVRGPT) the chain is on the cytoplasmic side. A helical transmembrane segment spans residues 168–188 (VQLVFGFEYAILLTVIASTAI). Residues 189 to 222 (KYVLHAAEMRTDTPWENKAVFLLYTELVIGLIKV) are Lumenal-facing. A helical membrane pass occupies residues 223-243 (VLYILFVVIMAKIYALPMFVF). Positions 234–268 (KIYALPMFVFRPMFFTIRNFRKALNDVIMSRRAIR) are interaction with p53/TP53. At 244–626 (RPMFFTIRNF…AATNERTTAE (383 aa)) the chain is on the cytoplasmic side. The RING-type; atypical zinc-finger motif lies at 289-328 (CIICREDMVNHSKKLPCGHIFHTTCLRSWFQRQQTCPTCR). The segment at 569-600 (DADEDDIPSTATEAVSIPNSDADFEENSSELG) is disordered. The span at 577 to 587 (STATEAVSIPN) shows a compositional bias: polar residues.

It belongs to the HRD1 family. In terms of assembly, homodimer. Interacts with p53. May interact with Septin2.

Its subcellular location is the endoplasmic reticulum membrane. The enzyme catalyses S-ubiquitinyl-[E2 ubiquitin-conjugating enzyme]-L-cysteine + [acceptor protein]-L-lysine = [E2 ubiquitin-conjugating enzyme]-L-cysteine + N(6)-ubiquitinyl-[acceptor protein]-L-lysine.. The protein operates within protein modification; protein ubiquitination. Acts as an E3 ubiquitin-protein ligase which accepts ubiquitin specifically from endoplasmic reticulum-associated UBC7 E2 ligase and transfers it to substrates, promoting their degradation. Component of the endoplasmic reticulum quality control (ERQC) system also called ER-associated degradation (ERAD) involved in ubiquitin-dependent degradation of misfolded endoplasmic reticulum proteins. Also promotes the degradation of normal but naturally short-lived proteins. Protects cells from ER stress-induced apoptosis. Sequesters p53 in the cytoplasm and promotes its degradation, thereby negatively regulating its biological function in transcription, cell cycle regulation and apoptosis. The protein is E3 ubiquitin-protein ligase HRD1 (sip3) of Drosophila melanogaster (Fruit fly).